A 455-amino-acid polypeptide reads, in one-letter code: Putative non-structural protein (455 aa).

The span at Lys262–His276 shows a compositional bias: basic and acidic residues. The interval Lys262 to Lys341 is disordered.

This is Putative non-structural protein from Bombyx mori (Silk moth).